The sequence spans 211 residues: N-(5'-phosphoribosyl)anthranilate isomerase (211 aa).

Belongs to the TrpF family.

It carries out the reaction N-(5-phospho-beta-D-ribosyl)anthranilate = 1-(2-carboxyphenylamino)-1-deoxy-D-ribulose 5-phosphate. The protein operates within amino-acid biosynthesis; L-tryptophan biosynthesis; L-tryptophan from chorismate: step 3/5. This Hyphomonas neptunium (strain ATCC 15444) protein is N-(5'-phosphoribosyl)anthranilate isomerase.